The sequence spans 141 residues: Hemoglobin subunit alpha-D (141 aa).

The Globin domain maps to 1-141; the sequence is MLTAEDKKLI…VAAVLAEKYR (141 aa). Heme b contacts are provided by histidine 58 and histidine 87.

It belongs to the globin family. Heterotetramer of two alpha-D chains and two beta chains. Red blood cells.

Involved in oxygen transport from the lung to the various peripheral tissues. This Cairina moschata (Muscovy duck) protein is Hemoglobin subunit alpha-D (HBAD).